We begin with the raw amino-acid sequence, 226 residues long: Putative uroporphyrinogen-III synthase (226 aa).

Belongs to the uroporphyrinogen-III synthase family.

It catalyses the reaction hydroxymethylbilane = uroporphyrinogen III + H2O. It participates in porphyrin-containing compound metabolism; protoporphyrin-IX biosynthesis; coproporphyrinogen-III from 5-aminolevulinate: step 3/4. Catalyzes cyclization of the linear tetrapyrrole, hydroxymethylbilane, to the macrocyclic uroporphyrinogen III. This is Putative uroporphyrinogen-III synthase from Archaeoglobus fulgidus (strain ATCC 49558 / DSM 4304 / JCM 9628 / NBRC 100126 / VC-16).